The following is a 303-amino-acid chain: Trans-enoyl reductase tazE (303 aa).

Residues 1–26 (MTAEHDAAILPKPGGPLAVGKRATPE) form a disordered region. 44 to 49 (CDYYQR) is a binding site for NADP(+). 136–143 (LAVLTALT) is a binding site for substrate. NADP(+)-binding positions include 170 to 173 (SSSV), 193 to 196 (SPKH), Tyr-211, and 246 to 247 (LD). 265–269 (VLPEC) is a binding site for substrate.

This sequence belongs to the zinc-containing alcohol dehydrogenase family.

Its pathway is secondary metabolite biosynthesis. Trans-enoyl reductase; part of the gene cluster that mediates the biosynthesis of azaterrilone A and other azaphilones, a class of fungal metabolites characterized by a highly oxygenated pyrano-quinone bicyclic core and exhibiting a broad range of bioactivities. The first step of the pathway begins with the non-reducing polyketide synthase tazA that assembles one acetyl-CoA starter unit, five malonyl-CoA units, and catalyzes a series of Claisen condensations, methylation, PT-mediated cyclization, and finally releases the first hexaketide precursor through the R-domain. The tazA product then undergoes reduction on its terminal ketone and the following pyran-ring formation by yet undetermined enzyme(s). Dehydration and enoyl reduction, possibly involving the trans-enoyl reductase tazE leads to the next intermediate. TazD is predicted as an acetyltransferase and might catalyze the acetylation steps leading to the synthesis of azaterrilone A. Azaterrilone A is not the final product of the taz pathway and both the highly reducing polyketide synthase tazB and the dual enzyme tazHJ catalyze late steps of the pathway, leading to the production of the 2 final stereoisomers that contain additional polyketide modification whose structures have still to be determined. The polypeptide is Trans-enoyl reductase tazE (Aspergillus terreus (strain NIH 2624 / FGSC A1156)).